Reading from the N-terminus, the 133-residue chain is Small ribosomal subunit protein uS8 (133 aa).

This sequence belongs to the universal ribosomal protein uS8 family. In terms of assembly, part of the 30S ribosomal subunit. Contacts proteins S5 and S12.

One of the primary rRNA binding proteins, it binds directly to 16S rRNA central domain where it helps coordinate assembly of the platform of the 30S subunit. The protein is Small ribosomal subunit protein uS8 of Nostoc punctiforme (strain ATCC 29133 / PCC 73102).